Reading from the N-terminus, the 93-residue chain is MMSLQMLLLAALLLGTSLQHASAARATNVGRECCLDYFKGAIPIRKLVTWFRTSVECPKDAIVFETVQGRLICTDPKDKHVKKAIRHLKNQRL.

Positions 1 to 23 are cleaved as a signal peptide; it reads MMSLQMLLLAALLLGTSLQHASA. 2 cysteine pairs are disulfide-bonded: C33–C57 and C34–C73.

The protein belongs to the intercrine beta (chemokine CC) family.

It is found in the secreted. In terms of biological role, chemokine, which displays chemotactic activity for T lymphocytes, preferentially Th2 cells, but not monocytes or granulocytes. Therefore plays an important role in a wide range of inflammatory and immunological processes. Acts by binding to CCR4 at T-cell surface. Mediates GM-CSF/CSF2-driven pain and inflammation. In the brain, required to maintain the typical, highly branched morphology of hippocampal microglia under homeostatic conditions. May be important for the appropriate adaptation of microglial morphology and synaptic plasticity to acute lipopolysaccharide (LPS)-induced neuroinflammation. Plays a role in wound healing, mainly by inducing fibroblast migration into the wound. The chain is C-C motif chemokine 17 (Ccl17) from Rattus norvegicus (Rat).